We begin with the raw amino-acid sequence, 375 residues long: Chaperone protein DnaJ (375 aa).

In terms of domain architecture, J spans 4 to 68; that stretch reads DYYEILGVSR…ETRARYDRFG (65 aa). The segment at 135–217 adopts a CR-type zinc-finger fold; the sequence is GGEKEIRISH…CDGKGANQVT (83 aa). The Zn(2+) site is built by Cys148, Cys151, Cys165, Cys168, Cys191, Cys194, Cys205, and Cys208. CXXCXGXG motif repeat units follow at residues 148-155, 165-172, 191-198, and 205-212; these read CEVCSGSG, CSTCSGSG, CPTCNGTG, and CDACDGKG.

The protein belongs to the DnaJ family. Homodimer. Zn(2+) is required as a cofactor.

The protein localises to the cytoplasm. Participates actively in the response to hyperosmotic and heat shock by preventing the aggregation of stress-denatured proteins and by disaggregating proteins, also in an autonomous, DnaK-independent fashion. Unfolded proteins bind initially to DnaJ; upon interaction with the DnaJ-bound protein, DnaK hydrolyzes its bound ATP, resulting in the formation of a stable complex. GrpE releases ADP from DnaK; ATP binding to DnaK triggers the release of the substrate protein, thus completing the reaction cycle. Several rounds of ATP-dependent interactions between DnaJ, DnaK and GrpE are required for fully efficient folding. Also involved, together with DnaK and GrpE, in the DNA replication of plasmids through activation of initiation proteins. The protein is Chaperone protein DnaJ of Nostoc punctiforme (strain ATCC 29133 / PCC 73102).